A 237-amino-acid polypeptide reads, in one-letter code: Uridylate kinase (237 aa).

9–12 lines the ATP pocket; sequence KLSG. Gly51 contributes to the UMP binding site. Residues Gly52 and Arg56 each contribute to the ATP site. UMP contacts are provided by residues Asp71 and 132–139; that span reads CGNPFFTT. 3 residues coordinate ATP: Thr159, Tyr165, and Asp168.

The protein belongs to the UMP kinase family. As to quaternary structure, homohexamer.

Its subcellular location is the cytoplasm. It catalyses the reaction UMP + ATP = UDP + ADP. It functions in the pathway pyrimidine metabolism; CTP biosynthesis via de novo pathway; UDP from UMP (UMPK route): step 1/1. Its activity is regulated as follows. Inhibited by UTP. Its function is as follows. Catalyzes the reversible phosphorylation of UMP to UDP. This Prochlorococcus marinus (strain MIT 9303) protein is Uridylate kinase.